A 236-amino-acid polypeptide reads, in one-letter code: Small ribosomal subunit protein uS10m (236 aa).

The N-terminal 24 residues, 1–24 (MMRQSIRPLRAFSSEVSWIARRTQ), are a transit peptide targeting the mitochondrion. The segment at 29 to 49 (KPGDLVPNKPEPSKNEQEPRF) is disordered. Residues 39–49 (EPSKNEQEPRF) are compositionally biased toward basic and acidic residues.

It belongs to the universal ribosomal protein uS10 family. Part of the mitochondrial small ribosomal subunit.

It localises to the mitochondrion. Involved in mitochondrial genome encoded proteins translation. Involved in the binding of tRNA to the ribosomes. The protein is Small ribosomal subunit protein uS10m (RSM10) of Gibberella zeae (strain ATCC MYA-4620 / CBS 123657 / FGSC 9075 / NRRL 31084 / PH-1) (Wheat head blight fungus).